A 721-amino-acid polypeptide reads, in one-letter code: BBSome complex member BBS2 (721 aa).

Residues 325-369 (RGNLMDTSAEQDLIRELSQKKQNLLLELRNYEENAKAELASPLNE) adopt a coiled-coil conformation.

Part of BBSome complex, that contains BBS1, BBS2, BBS4, BBS5, BBS7, BBS8/TTC8, BBS9 and BBIP10. Interacts (via C-terminus) with BBS7. Interacts (via coiled coil domain) with MKKS. Interacts with CCDC28B and ALDOB. Interacts with DLEC1. As to expression, widely expressed.

It localises to the cell projection. The protein resides in the cilium membrane. Its subcellular location is the cytoplasm. The protein localises to the cytoskeleton. It is found in the microtubule organizing center. It localises to the centrosome. The protein resides in the centriolar satellite. The BBSome complex is thought to function as a coat complex required for sorting of specific membrane proteins to the primary cilia. The BBSome complex is required for ciliogenesis but is dispensable for centriolar satellite function. This ciliogenic function is mediated in part by the Rab8 GDP/GTP exchange factor, which localizes to the basal body and contacts the BBSome. Rab8(GTP) enters the primary cilium and promotes extension of the ciliary membrane. Firstly the BBSome associates with the ciliary membrane and binds to RAB3IP/Rabin8, the guanosyl exchange factor (GEF) for Rab8 and then the Rab8-GTP localizes to the cilium and promotes docking and fusion of carrier vesicles to the base of the ciliary membrane. The BBSome complex, together with the LTZL1, controls SMO ciliary trafficking and contributes to the sonic hedgehog (SHH) pathway regulation. Required for proper BBSome complex assembly and its ciliary localization. The sequence is that of BBSome complex member BBS2 from Homo sapiens (Human).